The following is a 209-amino-acid chain: Uracil phosphoribosyltransferase (209 aa).

Residues Arg79, Arg104, and 131-139 (DPMLATGGS) each bind 5-phospho-alpha-D-ribose 1-diphosphate. Uracil-binding positions include Ile194 and 199–201 (GDA). Asp200 is a binding site for 5-phospho-alpha-D-ribose 1-diphosphate.

This sequence belongs to the UPRTase family. It depends on Mg(2+) as a cofactor.

It catalyses the reaction UMP + diphosphate = 5-phospho-alpha-D-ribose 1-diphosphate + uracil. It participates in pyrimidine metabolism; UMP biosynthesis via salvage pathway; UMP from uracil: step 1/1. Its activity is regulated as follows. Allosterically activated by GTP. Catalyzes the conversion of uracil and 5-phospho-alpha-D-ribose 1-diphosphate (PRPP) to UMP and diphosphate. This chain is Uracil phosphoribosyltransferase, found in Brevibacillus brevis (strain 47 / JCM 6285 / NBRC 100599).